The chain runs to 109 residues: MSQGVQFNRLMLEMRAMQTDAMARSKPEVQTQEVGAPSFSDMLGQAVNKVHETQQVSSQLASAFEMGQGGVDLTEVMIASQKASVSFQAMTQVRNKLVQAYQDIMQMPV.

The protein belongs to the FliE family.

Its subcellular location is the bacterial flagellum basal body. This Stutzerimonas stutzeri (strain A1501) (Pseudomonas stutzeri) protein is Flagellar hook-basal body complex protein FliE.